A 245-amino-acid polypeptide reads, in one-letter code: MVGNWKMNNTIAESVDLATAIAEKVGADGVQCEVGIAPTFPALYEVCKVIEWSGIRLCAQNCHYESDGPFTGEVSTRMLAAAGCSYVILGHSERRQLFGETNATVNLKVKKALAEGLSVILCVGETLDERERGVTGQIVTAQVVEGLIDVTDISKLVIAYEPVWAIGTGKTATKEQAQEVHALIRAKVTELYGQKAADHLRIQYGGSVKPSNAAELFAMPDIDGGLIGGASLNADDFMAIVEAAG.

A substrate-binding site is contributed by 4–6; sequence NWK. Catalysis depends on histidine 91, which acts as the Electrophile. The active-site Proton acceptor is the glutamate 161. Substrate-binding positions include glycine 167, serine 207, and 228 to 229; that span reads GG.

Belongs to the triosephosphate isomerase family. In terms of assembly, homodimer.

Its subcellular location is the cytoplasm. It catalyses the reaction D-glyceraldehyde 3-phosphate = dihydroxyacetone phosphate. The protein operates within carbohydrate biosynthesis; gluconeogenesis. It participates in carbohydrate degradation; glycolysis; D-glyceraldehyde 3-phosphate from glycerone phosphate: step 1/1. In terms of biological role, involved in the gluconeogenesis. Catalyzes stereospecifically the conversion of dihydroxyacetone phosphate (DHAP) to D-glyceraldehyde-3-phosphate (G3P). The polypeptide is Triosephosphate isomerase (Chlorobaculum tepidum (strain ATCC 49652 / DSM 12025 / NBRC 103806 / TLS) (Chlorobium tepidum)).